Here is a 611-residue protein sequence, read N- to C-terminus: Probable Xaa-Pro aminopeptidase P (611 aa).

Positions 408, 419, 517, and 531 each coordinate Mn(2+).

Belongs to the peptidase M24B family. The cofactor is Mn(2+).

It carries out the reaction Release of any N-terminal amino acid, including proline, that is linked to proline, even from a dipeptide or tripeptide.. Functionally, catalyzes the removal of a penultimate prolyl residue from the N-termini of peptides. This chain is Probable Xaa-Pro aminopeptidase P (AMPP), found in Coccidioides posadasii (strain RMSCC 757 / Silveira) (Valley fever fungus).